A 161-amino-acid chain; its full sequence is Nucleotide-binding protein Veis_3464 (161 aa).

It belongs to the YajQ family.

Its function is as follows. Nucleotide-binding protein. The protein is Nucleotide-binding protein Veis_3464 of Verminephrobacter eiseniae (strain EF01-2).